Reading from the N-terminus, the 85-residue chain is uncharacterized protein (85 aa).

Transmembrane regions (helical) follow at residues 13-35 and 59-81; these read KWLA…FQPL and EGIV…HLLL.

It is found in the cell membrane. This is an uncharacterized protein from Archaeoglobus fulgidus (strain ATCC 49558 / DSM 4304 / JCM 9628 / NBRC 100126 / VC-16).